The sequence spans 845 residues: G-type lectin S-receptor-like serine/threonine-protein kinase At1g11410 (845 aa).

A signal peptide spans 1 to 21; that stretch reads MKFFFIFFIFLFSFLIQSCYS. Residues 22 to 147 form the Bulb-type lectin domain; the sequence is DNTILRSQSL…VTGKSFWESF (126 aa). The Extracellular portion of the chain corresponds to 22-441; the sequence is DNTILRSQSL…NGNGASGKKR (420 aa). N-linked (GlcNAc...) asparagine glycans are attached at residues asparagine 82, asparagine 103, asparagine 185, asparagine 231, and asparagine 259. In terms of domain architecture, EGF-like spans 283-321; the sequence is PEDKCDIYNHCGFNGYCDSTSTEKFECSCLPGYEPKTPR. Intrachain disulfides connect cysteine 287–cysteine 299 and cysteine 293–cysteine 309. Residues 341-424 enclose the PAN domain; it reads CNGKEGFAKL…SGQDFYLRVD (84 aa). Residues asparagine 357, asparagine 366, and asparagine 379 are each glycosylated (N-linked (GlcNAc...) asparagine). Disulfide bonds link cysteine 372-cysteine 399 and cysteine 376-cysteine 382. A helical membrane pass occupies residues 442–462; that stretch reads LVLILISLIAVVMLLLISFHC. The Cytoplasmic portion of the chain corresponds to 463 to 845; sequence YLRKRRQRTQ…DVTLTDVQGR (383 aa). Residues 523 to 808 form the Protein kinase domain; the sequence is FAFQNKLGAG…DLPSPKHPAF (286 aa). Residues 529-537 and lysine 551 contribute to the ATP site; that span reads LGAGGFGPV. The caM-binding stretch occupies residues 612-629; that stretch reads EQRAELDWPKRMGIIRGI. The Proton acceptor role is filled by aspartate 648. A disordered region spans residues 803–845; it reads PKHPAFTAGRRRNTKTGGSSDNWPSGETSSTINDVTLTDVQGR. Polar residues predominate over residues 817–845; that stretch reads KTGGSSDNWPSGETSSTINDVTLTDVQGR.

Belongs to the protein kinase superfamily. Ser/Thr protein kinase family.

The protein resides in the cell membrane. It carries out the reaction L-seryl-[protein] + ATP = O-phospho-L-seryl-[protein] + ADP + H(+). The catalysed reaction is L-threonyl-[protein] + ATP = O-phospho-L-threonyl-[protein] + ADP + H(+). The protein is G-type lectin S-receptor-like serine/threonine-protein kinase At1g11410 of Arabidopsis thaliana (Mouse-ear cress).